Reading from the N-terminus, the 88-residue chain is MENEKGEIVDLYVPRKCSATNRIIKANDHASVQISIAKVDENGRYTGENQSYALCGFIRARGESDDSLNRLCQRDGYIRNVWSASRQR.

This sequence belongs to the eukaryotic ribosomal protein eS21 family. Component of the small ribosomal subunit. Mature ribosomes consist of a small (40S) and a large (60S) subunit. The 40S subunit contains about 33 different proteins and 1 molecule of RNA (18S). The 60S subunit contains about 49 different proteins and 3 molecules of RNA (25S, 5.8S and 5S).

Its subcellular location is the cytoplasm. In terms of biological role, required for the processing of the 20S rRNA-precursor to mature 18S rRNA in a late step of the maturation of 40S ribosomal subunits. Has a physiological role leading to 18S rRNA stability. In Aspergillus fumigatus (strain ATCC MYA-4609 / CBS 101355 / FGSC A1100 / Af293) (Neosartorya fumigata), this protein is Small ribosomal subunit protein eS21 (rps21).